A 179-amino-acid chain; its full sequence is Probable F-box protein At3g25550 (179 aa).

The F-box domain maps to 19–55 (IPNDDVLEEIIVRLPVKTLTRFQTVSKHWRHTIKSRN).

The chain is Probable F-box protein At3g25550 from Arabidopsis thaliana (Mouse-ear cress).